The primary structure comprises 37 residues: Mau operon transcriptional activator (37 aa).

Belongs to the LysR transcriptional regulatory family.

Transcriptional activator of the mau genes involved in methylamine metabolism. This chain is Mau operon transcriptional activator (mauR), found in Paracoccus versutus (Thiobacillus versutus).